We begin with the raw amino-acid sequence, 200 residues long: Probable molybdenum cofactor guanylyltransferase (200 aa).

Residues 9-11, Lys21, Asp69, and Asp100 each bind GTP; that span reads LAG. Residue Asp100 coordinates Mg(2+).

Belongs to the MobA family. The cofactor is Mg(2+).

The protein resides in the cytoplasm. It carries out the reaction Mo-molybdopterin + GTP + H(+) = Mo-molybdopterin guanine dinucleotide + diphosphate. Functionally, transfers a GMP moiety from GTP to Mo-molybdopterin (Mo-MPT) cofactor (Moco or molybdenum cofactor) to form Mo-molybdopterin guanine dinucleotide (Mo-MGD) cofactor. The sequence is that of Probable molybdenum cofactor guanylyltransferase from Bacillus mycoides (strain KBAB4) (Bacillus weihenstephanensis).